We begin with the raw amino-acid sequence, 370 residues long: Phosphate acyltransferase (370 aa).

The interval 349–370 (SAGRAGQDAPDEMAAPGRSEKR) is disordered.

Belongs to the PlsX family. In terms of assembly, homodimer. Probably interacts with PlsY.

Its subcellular location is the cytoplasm. The enzyme catalyses a fatty acyl-[ACP] + phosphate = an acyl phosphate + holo-[ACP]. It participates in lipid metabolism; phospholipid metabolism. In terms of biological role, catalyzes the reversible formation of acyl-phosphate (acyl-PO(4)) from acyl-[acyl-carrier-protein] (acyl-ACP). This enzyme utilizes acyl-ACP as fatty acyl donor, but not acyl-CoA. This is Phosphate acyltransferase from Cereibacter sphaeroides (strain ATCC 17029 / ATH 2.4.9) (Rhodobacter sphaeroides).